A 254-amino-acid chain; its full sequence is Thiazole synthase (254 aa).

Residue lysine 95 is the Schiff-base intermediate with DXP of the active site. 1-deoxy-D-xylulose 5-phosphate-binding positions include glycine 156, 182–183, and 204–205; these read AG and NT.

It belongs to the ThiG family. As to quaternary structure, homotetramer. Forms heterodimers with either ThiH or ThiS.

It is found in the cytoplasm. The enzyme catalyses [ThiS sulfur-carrier protein]-C-terminal-Gly-aminoethanethioate + 2-iminoacetate + 1-deoxy-D-xylulose 5-phosphate = [ThiS sulfur-carrier protein]-C-terminal Gly-Gly + 2-[(2R,5Z)-2-carboxy-4-methylthiazol-5(2H)-ylidene]ethyl phosphate + 2 H2O + H(+). The protein operates within cofactor biosynthesis; thiamine diphosphate biosynthesis. Functionally, catalyzes the rearrangement of 1-deoxy-D-xylulose 5-phosphate (DXP) to produce the thiazole phosphate moiety of thiamine. Sulfur is provided by the thiocarboxylate moiety of the carrier protein ThiS. In vitro, sulfur can be provided by H(2)S. This Shewanella baltica (strain OS223) protein is Thiazole synthase.